A 173-amino-acid chain; its full sequence is Sialic acid TRAP transporter small permease protein SiaQ (173 aa).

Helical transmembrane passes span 13–33 (IEEIITVPLMAALLAVLTWQI), 46–66 (SEELARLLFMYMCLVGCAIAI), 87–107 (LSLVLSLEIAVLVSIGAIIVL), and 123–143 (LGISSSWMNYSLPVGGVFMVF).

The protein belongs to the TRAP transporter small permease family. As to quaternary structure, the complex comprises the extracytoplasmic solute receptor protein SiaP, and the two transmembrane proteins SiaQ and SiaM. SiaQ and SiaM form a tight 1:1 complex.

It is found in the cell inner membrane. Functionally, part of the tripartite ATP-independent periplasmic (TRAP) transport system SiaPQM that catalyzes unidirectional Na(+)-dependent sialic acid uptake. This is Sialic acid TRAP transporter small permease protein SiaQ from Vibrio cholerae serotype O1 (strain ATCC 39315 / El Tor Inaba N16961).